The following is a 137-amino-acid chain: Sec-independent protein translocase protein TatB (137 aa).

A helical membrane pass occupies residues 2-22 (FANIGWGEMLILVIAGLVILG). The interval 92 to 137 (FFTGKFDQQNGKPAAGQEKPVTPVNPPVTATPPSESTATPFDSDAT) is disordered. The span at 122 to 131 (TPPSESTATP) shows a compositional bias: low complexity.

Belongs to the TatB family. The Tat system comprises two distinct complexes: a TatABC complex, containing multiple copies of TatA, TatB and TatC subunits, and a separate TatA complex, containing only TatA subunits. Substrates initially bind to the TatABC complex, which probably triggers association of the separate TatA complex to form the active translocon.

Its subcellular location is the cell membrane. Functionally, part of the twin-arginine translocation (Tat) system that transports large folded proteins containing a characteristic twin-arginine motif in their signal peptide across membranes. Together with TatC, TatB is part of a receptor directly interacting with Tat signal peptides. TatB may form an oligomeric binding site that transiently accommodates folded Tat precursor proteins before their translocation. The sequence is that of Sec-independent protein translocase protein TatB from Mycobacterium sp. (strain JLS).